The following is a 199-amino-acid chain: Probable GTP-binding protein EngB (199 aa).

The region spanning 25-199 (IGMEVAFVGY…LKRVLNNWLR (175 aa)) is the EngB-type G domain. 2 residues coordinate Mg(2+): Ser40 and Thr62.

It belongs to the TRAFAC class TrmE-Era-EngA-EngB-Septin-like GTPase superfamily. EngB GTPase family. It depends on Mg(2+) as a cofactor.

Necessary for normal cell division and for the maintenance of normal septation. The sequence is that of Probable GTP-binding protein EngB from Blochmanniella pennsylvanica (strain BPEN).